The sequence spans 528 residues: Tyrosine--tRNA ligase, cytoplasmic (528 aa).

N-acetylmethionine is present on methionine 1. Position 2 is an N-acetylglycine; in Tyrosine--tRNA ligase, cytoplasmic, N-terminally processed (glycine 2). Tyrosine 39 contributes to the L-tyrosine binding site. Tyrosine 39 contacts trans-resveratrol. The 'HIGH' region motif lies at 44-52; sequence TTGKPHVAY. 4 residues coordinate L-tyrosine: tyrosine 166, glutamine 170, aspartate 173, and glutamine 188. Residues glutamine 170 and aspartate 173 each contribute to the trans-resveratrol site. Residue lysine 197 is modified to N6-acetyllysine. Position 205 is a phosphoserine (serine 205). N6-acetyllysine is present on lysine 206. Positions 222-226 match the 'KMSKS' region motif; that stretch reads KMSSS. The short motif at 242–247 is the Nuclear localization signal element; sequence KKKLKK. Residues 339–363 form a disordered region; sequence AAYPDPSKQKPMAKGPAKNSEPEEV. The tRNA-binding domain maps to 364–468; the sequence is IPSRLDIRVG…AGSAPGERVF (105 aa). Position 386 is a phosphoserine (serine 386). N6-acetyllysine occurs at positions 474, 482, and 490.

It belongs to the class-I aminoacyl-tRNA synthetase family. As to quaternary structure, homodimer. Interacts (when binding to resveratrol) with PARP1; interaction stimulates the poly-ADP-ribosyltransferase activity of PARP1.

The protein localises to the cytoplasm. It is found in the nucleus. It catalyses the reaction tRNA(Tyr) + L-tyrosine + ATP = L-tyrosyl-tRNA(Tyr) + AMP + diphosphate + H(+). Its activity is regulated as follows. Resveratrol strongly inhibits the tyrosine--tRNA ligase activity. Functionally, tyrosine--tRNA ligase that catalyzes the attachment of tyrosine to tRNA(Tyr) in a two-step reaction: tyrosine is first activated by ATP to form Tyr-AMP and then transferred to the acceptor end of tRNA(Tyr). Also acts as a positive regulator of poly-ADP-ribosylation in the nucleus, independently of its tyrosine--tRNA ligase activity. Activity is switched upon resveratrol-binding: resveratrol strongly inhibits the tyrosine--tRNA ligase activity and promotes relocalization to the nucleus, where YARS1 specifically stimulates the poly-ADP-ribosyltransferase activity of PARP1. The chain is Tyrosine--tRNA ligase, cytoplasmic (YARS1) from Pongo abelii (Sumatran orangutan).